Reading from the N-terminus, the 221-residue chain is Hydrogenase expression/formation protein HupD (221 aa).

The Ni(2+) site is built by E20, D66, and H97.

Belongs to the peptidase A31 family.

In terms of biological role, not known. Could be involved in the processing of hydrogenase. The protein is Hydrogenase expression/formation protein HupD (hupD) of Thiocapsa roseopersicina.